The sequence spans 330 residues: Uracil-DNA glycosylase, mitochondrial (330 aa).

Residues 1–49 constitute a mitochondrion transit peptide; sequence MASSTPKTLMDFFQPAKRLKASPSSSSFPAVSVAGGSRDLGSVANSPPR. Aspartate 173 functions as the Proton acceptor in the catalytic mechanism.

The protein belongs to the uracil-DNA glycosylase (UDG) superfamily. UNG family.

The protein localises to the mitochondrion. The enzyme catalyses Hydrolyzes single-stranded DNA or mismatched double-stranded DNA and polynucleotides, releasing free uracil.. Its activity is regulated as follows. Inhidited by the small peptide uracil-DNA-glycosylase inhibitor (Ugi). In terms of biological role, excises uracil residues from the DNA which can arise as a result of misincorporation of dUMP residues by DNA polymerase or due to deamination of cytosine. More active on U:G, U:T and U:C mispairs than on U:A pairs. Highly specific for uracil and no activity with 5-substituted uracil or cytosine derivatives. Required for initiation of base excision repair (BER) of uracil. In Arabidopsis thaliana (Mouse-ear cress), this protein is Uracil-DNA glycosylase, mitochondrial.